Here is a 324-residue protein sequence, read N- to C-terminus: NADH-ubiquinone oxidoreductase chain 1 (324 aa).

The next 9 membrane-spanning stretches (helical) occupy residues 9–29 (IINP…LTLL), 43–63 (PNIV…KLFI), 75–95 (FLFL…WAPM), 106–126 (LGVL…LGSG), 146–166 (ISYE…TGGF), 177–197 (SIWL…STLA), 237–257 (ILLM…IPAF), 259–279 (ELTA…FLWV), and 299–319 (FLPL…AMAG).

It belongs to the complex I subunit 1 family.

It localises to the mitochondrion inner membrane. It carries out the reaction a ubiquinone + NADH + 5 H(+)(in) = a ubiquinol + NAD(+) + 4 H(+)(out). In terms of biological role, core subunit of the mitochondrial membrane respiratory chain NADH dehydrogenase (Complex I) that is believed to belong to the minimal assembly required for catalysis. Complex I functions in the transfer of electrons from NADH to the respiratory chain. The immediate electron acceptor for the enzyme is believed to be ubiquinone. In Salmo salar (Atlantic salmon), this protein is NADH-ubiquinone oxidoreductase chain 1 (MT-ND1).